The following is a 446-amino-acid chain: MPARAAGAGVELSRLSAFKPDLYHRAWSSIPHPTLPLIATAHEKSVTVFSLSTLSAHSNLTGGHTRSVRCAVWKPNLPSGKLCLVTASFDSTAGLWRWEGDVPLEEGTKKGESTEIDVTRRRNNNDSDKDNDDDWEFTLVLEGHENEIKSAAFSPSGQYLATCSRDKSIWIWEDVGANEGDDEWETVAVLTEHDGDVKCVAWCPDVPGRNISSYSPDVLASASYDDTIRIWREDGDGEWACVAVLEGHSSTVWGVQWEPKVDNTKFPRLISWSADKTIRVWTLEQDDPEASLSQPGAVQSPFKSGLGGIPNTMRRTLKEEWRCSAVLPSVHTRDIYSASWSKNGRVASTGSDGSILVYEECAPSNPSTTPADLEEGDSNVIVKPGEAKWKVLGKVSDGHGPYEINHITWCSRYDAGVEQRGVEEMLVTTGDDGIVQAWQLKESIEL.

WD repeat units follow at residues 17 to 59 (AFKP…AHSN), 63 to 106 (GHTR…PLEE), 143 to 182 (GHEN…EGDD), 192 to 241 (EHDG…EWAC), 247 to 291 (GHSS…PEAS), 330 to 368 (VHTR…NPST), and 398 to 446 (GHGP…SIEL). The span at 106–128 (EGTKKGESTEIDVTRRRNNNDSD) shows a compositional bias: basic and acidic residues. A disordered region spans residues 106 to 133 (EGTKKGESTEIDVTRRRNNNDSDKDNDD).

It belongs to the WD repeat CIA1 family.

Its function is as follows. Essential component of the cytosolic iron-sulfur (Fe/S) protein assembly machinery. Required for the maturation of extramitochondrial Fe/S proteins. In Pyricularia oryzae (strain 70-15 / ATCC MYA-4617 / FGSC 8958) (Rice blast fungus), this protein is Probable cytosolic iron-sulfur protein assembly protein 1.